We begin with the raw amino-acid sequence, 1107 residues long: Polyphosphatidylinositol phosphatase INP53 (1107 aa).

Positions 142 to 482 (LKKLLSNGSF…GDQISQIYTG (341 aa)) constitute an SAC domain. At Ser497 the chain carries Phosphoserine. The disordered stretch occupies residues 926 to 1107 (TASSVASSSP…LDSWQPLTPK (182 aa)). Positions 927 to 942 (ASSVASSSPVSSASAS) are enriched in low complexity. Residues 943–956 (LQPVRTQNSSQSRT) are compositionally biased toward polar residues. Ser986 is subject to Phosphoserine. Polar residues-rich tracts occupy residues 987–1005 (PTPQ…NIQE), 1020–1038 (FSQN…SPMS), 1045–1063 (NSAS…QTPT), and 1097–1107 (TLDSWQPLTPK). Ser1035 is modified (phosphoserine). Thr1105 bears the Phosphothreonine mark.

Belongs to the synaptojanin family. It in the central section; belongs to the inositol 1,4,5-trisphosphate 5-phosphatase family. In terms of assembly, interacts (via SAC domain) with BSP1; the interaction is direct. Interacts with CHC1.

The protein localises to the cytoplasm. It carries out the reaction a 1,2-diacyl-sn-glycero-3-phospho-(1D-myo-inositol-4,5-bisphosphate) + H2O = a 1,2-diacyl-sn-glycero-3-phospho-(1D-myo-inositol 4-phosphate) + phosphate. Dephosphorylates a number of phosphatidylinositols (PIs) like phosphatidylinositol 4,5-bisphosphate (PtdIns(4,5)P2), but also phosphatidylinositol 3-phosphate (PtdIns(3)P), phosphatidylinositol 4-phosphate (PtdIns(4)P), and phosphatidylinositol 3,5-bisphosphate (PtdIns(3,5)P2). Controls the cellular levels and subcellular distribution of phosphatidylinositol 3-phosphate and phosphatidylinositol 4,5-bisphosphate. Plays an essential role in a TGN (trans Golgi network)-to-early endosome pathway. Involved in clathrin-mediated protein sorting at the TGN. The polypeptide is Polyphosphatidylinositol phosphatase INP53 (INP53) (Saccharomyces cerevisiae (strain ATCC 204508 / S288c) (Baker's yeast)).